We begin with the raw amino-acid sequence, 100 residues long: NADH-quinone oxidoreductase subunit K (100 aa).

Transmembrane regions (helical) follow at residues 4 to 24 (LTHG…GLVI), 28 to 48 (LLFM…AFVV), and 60 to 80 (VMYI…LALL).

Belongs to the complex I subunit 4L family. In terms of assembly, NDH-1 is composed of 13 different subunits. Subunits NuoA, H, J, K, L, M, N constitute the membrane sector of the complex.

It is found in the cell inner membrane. The catalysed reaction is a quinone + NADH + 5 H(+)(in) = a quinol + NAD(+) + 4 H(+)(out). In terms of biological role, NDH-1 shuttles electrons from NADH, via FMN and iron-sulfur (Fe-S) centers, to quinones in the respiratory chain. The immediate electron acceptor for the enzyme in this species is believed to be ubiquinone. Couples the redox reaction to proton translocation (for every two electrons transferred, four hydrogen ions are translocated across the cytoplasmic membrane), and thus conserves the redox energy in a proton gradient. The chain is NADH-quinone oxidoreductase subunit K from Enterobacter sp. (strain 638).